A 130-amino-acid polypeptide reads, in one-letter code: Annexin A1 (130 aa).

Q19 participates in a covalent cross-link: Isoglutamyl lysine isopeptide (Gln-Lys) (interchain with K-?). A Phosphoserine; by PKC modification is found at S24. 2 Annexin repeats span residues 37–108 and 109–130; these read FDPS…ALLK and TPAQ…TDRR. G54, V55, E57, K92, L95, E100, M122, G124, G126, T127, and R130 together coordinate Ca(2+).

It belongs to the annexin family.

Its subcellular location is the nucleus. It localises to the cytoplasm. The protein localises to the cell projection. It is found in the cilium. The protein resides in the basolateral cell membrane. Its subcellular location is the lateral cell membrane. It localises to the cell membrane. The protein localises to the apical cell membrane. It is found in the membrane. The protein resides in the early endosome. Its subcellular location is the cytoplasmic vesicle membrane. It localises to the endosome membrane. The protein localises to the secreted. It is found in the extracellular space. The protein resides in the extracellular exosome. Its subcellular location is the cytoplasmic vesicle. It localises to the secretory vesicle lumen. The protein localises to the phagocytic cup. In terms of biological role, plays important roles in the innate immune response as effector of glucocorticoid-mediated responses and regulator of the inflammatory process. Has anti-inflammatory activity. Plays a role in glucocorticoid-mediated down-regulation of the early phase of the inflammatory response. Promotes resolution of inflammation and wound healing. Functions at least in part by activating the formyl peptide receptors and downstream signaling cascades. Promotes chemotaxis of granulocytes and monocytes via activation of the formyl peptide receptors. Contributes to the adaptive immune response by enhancing signaling cascades that are triggered by T-cell activation, regulates differentiation and proliferation of activated T-cells. Promotes the differentiation of T-cells into Th1 cells and negatively regulates differentiation into Th2 cells. Has no effect on unstimulated T-cells. Promotes rearrangement of the actin cytoskeleton, cell polarization and cell migration. Negatively regulates hormone exocytosis via activation of the formyl peptide receptors and reorganization of the actin cytoskeleton. Has high affinity for Ca(2+) and can bind up to eight Ca(2+) ions. Displays Ca(2+)-dependent binding to phospholipid membranes. Plays a role in the formation of phagocytic cups and phagosomes. Plays a role in phagocytosis by mediating the Ca(2+)-dependent interaction between phagosomes and the actin cytoskeleton. In Gallus gallus (Chicken), this protein is Annexin A1 (ANXA1).